The chain runs to 327 residues: 2-methoxy-6-polyprenyl-1,4-benzoquinol methylase, mitochondrial (327 aa).

A mitochondrion-targeting transit peptide spans 1–49 (MAAPRSCVLWSYCGHGWSRLAGDCRLPGFRRSWLGATLSARSLSQEKRA). Residues T117, D171, and 199-200 (DA) contribute to the S-adenosyl-L-methionine site.

The protein belongs to the class I-like SAM-binding methyltransferase superfamily. MenG/UbiE family. In terms of assembly, component of a multi-subunit COQ enzyme complex, composed of at least COQ3, COQ4, COQ5, COQ6, COQ7 and COQ9. Interacts with PYURF; the interaction is direct, stabilizes COQ5 protein and associates PYURF with COQ enzyme complex.

It localises to the mitochondrion inner membrane. The catalysed reaction is 2-methoxy-6-(all-trans-decaprenyl)benzene-1,4-diol + S-adenosyl-L-methionine = 5-methoxy-2-methyl-3-(all-trans-decaprenyl)benzene-1,4-diol + S-adenosyl-L-homocysteine + H(+). The protein operates within cofactor biosynthesis; ubiquinone biosynthesis. Methyltransferase required for the conversion of 2-decaprenyl-6-methoxy-1,4-benzoquinol (DDMQH2) to 2-decaprenyl-3-methyl-6-methoxy-1,4-benzoquinol (DMQH2). In Rattus norvegicus (Rat), this protein is 2-methoxy-6-polyprenyl-1,4-benzoquinol methylase, mitochondrial.